Consider the following 147-residue polypeptide: Hemoglobin subunit beta (147 aa).

Positions 3–147 (EWTDSERAII…VVSALGREYH (145 aa)) constitute a Globin domain. His64 and His93 together coordinate heme b.

It belongs to the globin family. In terms of assembly, heterotetramer of two alpha chains and two beta chains. Red blood cells.

Functionally, involved in oxygen transport from gills to the various peripheral tissues. This is Hemoglobin subunit beta (hbb) from Gadus morhua (Atlantic cod).